Consider the following 416-residue polypeptide: MDPEAFSASLFKWDPRGAMPPPTRLLEAAVAPPPPPPALPPPQPLSAAYSIKTRELGGLEELFQAYGIRYYTAAKIAELGFTVNTLLDMKDEELDDMMNSLSQIFRWELLVGERYGIKAAIRAERRRLEEEELRRRGHLLSDGGTNALDALSQEGLSEEPVQQQEREAVGSGGGGTTWEVVAAAGGGRMKQRRRKKVVAAGREKRGGASAEEDEETEEGQEDDWNINDASGGISERQREHPFIVTEPGEVARGKKNGLDYLFHLYEQCRDFLIQVQNIAKERGEKCPTKVTNQVFRYAKKAGASYINKPKMRHYVHCYALHCLDEEASNALRRAFKERGENVGAWRQACYKPLVAIAARQGWDIDTIFNAHPRLAIWYVPTKLRQLCHSERSNAAAAAASSSVSGGGGGGDHLPHF.

Residues 154–237 (EGLSEEPVQQ…DASGGISERQ (84 aa)) form a disordered region. Over residues 210–225 (AEEDEETEEGQEDDWN) the composition is skewed to acidic residues. DNA-binding regions lie at residues 238 to 242 (REHPF), 307 to 314 (NKPKMRHY), and 378 to 381 (YVPT).

It belongs to the FLO/LFY family. As to expression, expressed in floral meristems and in indeterminate vegetative meristems.

Its subcellular location is the nucleus. In terms of biological role, probable transcription factor that act to specify determinacy in the progenitor cells for both flowers and leaves. This is Floricaula/leafy homolog 2 (FL2) from Nicotiana tabacum (Common tobacco).